Here is a 391-residue protein sequence, read N- to C-terminus: Succinate--CoA ligase [ADP-forming] subunit beta (391 aa).

An ATP-grasp domain is found at 9–248; sequence KDILRKFGVA…ISEEDPFEVE (240 aa). ATP-binding positions include Lys50, 57–59, Glu103, Met106, and Glu111; that span reads GRG. Mg(2+)-binding residues include Asn203 and Asp217. Residues Asn268 and 325 to 327 each bind substrate; that span reads GIV.

It belongs to the succinate/malate CoA ligase beta subunit family. Heterotetramer of two alpha and two beta subunits. Mg(2+) is required as a cofactor.

The catalysed reaction is succinate + ATP + CoA = succinyl-CoA + ADP + phosphate. It catalyses the reaction GTP + succinate + CoA = succinyl-CoA + GDP + phosphate. It functions in the pathway carbohydrate metabolism; tricarboxylic acid cycle; succinate from succinyl-CoA (ligase route): step 1/1. Succinyl-CoA synthetase functions in the citric acid cycle (TCA), coupling the hydrolysis of succinyl-CoA to the synthesis of either ATP or GTP and thus represents the only step of substrate-level phosphorylation in the TCA. The beta subunit provides nucleotide specificity of the enzyme and binds the substrate succinate, while the binding sites for coenzyme A and phosphate are found in the alpha subunit. This Chlorobium luteolum (strain DSM 273 / BCRC 81028 / 2530) (Pelodictyon luteolum) protein is Succinate--CoA ligase [ADP-forming] subunit beta.